Here is a 788-residue protein sequence, read N- to C-terminus: Pyridoxal-dependent decarboxylase domain-containing protein 1 (788 aa).

A compositionally biased stretch (basic and acidic residues) spans 28 to 40; that stretch reads EDSQRRTEEENGK. Residues 28–51 are disordered; sequence EDSQRRTEEENGKKLISGDIPGPL. Position 414 is a phosphothreonine (T414). Position 652 is a phosphoserine (S652). The tract at residues 684 to 788 is disordered; it reads AGVTLPPTPS…SQVEGPESLR (105 aa). Phosphothreonine is present on residues T687 and T691. Phosphoserine is present on residues S710, S718, and S722. The segment covering 725–734 has biased composition (basic and acidic residues); the sequence is HIEDLEKVER. A compositionally biased stretch (polar residues) spans 738–750; that stretch reads GPEQITLEASSTE. Phosphoserine occurs at positions 748, 757, 779, and 786. The segment covering 772–788 has biased composition (basic and acidic residues); sequence PHPEDDHSQVEGPESLR.

This sequence belongs to the group II decarboxylase family. The cofactor is pyridoxal 5'-phosphate.

The sequence is that of Pyridoxal-dependent decarboxylase domain-containing protein 1 (PDXDC1) from Homo sapiens (Human).